The following is a 440-amino-acid chain: Serine hydroxymethyltransferase (440 aa).

Residues leucine 119 and 123–125 each bind (6S)-5,6,7,8-tetrahydrofolate; that span reads GHL. The residue at position 228 (lysine 228) is an N6-(pyridoxal phosphate)lysine. Residue 370–372 participates in (6S)-5,6,7,8-tetrahydrofolate binding; that stretch reads SPF.

Belongs to the SHMT family. In terms of assembly, homodimer. Pyridoxal 5'-phosphate is required as a cofactor.

The protein localises to the cytoplasm. It carries out the reaction (6R)-5,10-methylene-5,6,7,8-tetrahydrofolate + glycine + H2O = (6S)-5,6,7,8-tetrahydrofolate + L-serine. It participates in one-carbon metabolism; tetrahydrofolate interconversion. The protein operates within amino-acid biosynthesis; glycine biosynthesis; glycine from L-serine: step 1/1. In terms of biological role, catalyzes the reversible interconversion of serine and glycine with tetrahydrofolate (THF) serving as the one-carbon carrier. This reaction serves as the major source of one-carbon groups required for the biosynthesis of purines, thymidylate, methionine, and other important biomolecules. Also exhibits THF-independent aldolase activity toward beta-hydroxyamino acids, producing glycine and aldehydes, via a retro-aldol mechanism. The chain is Serine hydroxymethyltransferase from Chlorobaculum parvum (strain DSM 263 / NCIMB 8327) (Chlorobium vibrioforme subsp. thiosulfatophilum).